A 414-amino-acid polypeptide reads, in one-letter code: Putative ankyrin repeat protein BB_B28 (414 aa).

ANK repeat units lie at residues 326-355 (NGNPIFTYAINVKAKSIINYLITKEFNINL) and 359-389 (NSQTALHSAIIQKYDLNFIKSLIEKGANPNI).

In Borreliella burgdorferi (strain ATCC 35210 / DSM 4680 / CIP 102532 / B31) (Borrelia burgdorferi), this protein is Putative ankyrin repeat protein BB_B28.